The sequence spans 159 residues: Ribosome maturation factor RimP (159 aa).

Belongs to the RimP family.

The protein resides in the cytoplasm. In terms of biological role, required for maturation of 30S ribosomal subunits. This is Ribosome maturation factor RimP from Streptococcus pneumoniae (strain 70585).